The chain runs to 260 residues: tRNA pseudouridine synthase C (260 aa).

Asp54 is a catalytic residue.

The protein belongs to the pseudouridine synthase RluA family.

The catalysed reaction is uridine(65) in tRNA = pseudouridine(65) in tRNA. Functionally, responsible for synthesis of pseudouridine from uracil-65 in transfer RNAs. In Escherichia coli O6:H1 (strain CFT073 / ATCC 700928 / UPEC), this protein is tRNA pseudouridine synthase C (truC).